We begin with the raw amino-acid sequence, 120 residues long: Kidney androgen-regulated protein (120 aa).

A signal peptide spans 1–18 (MMICKVLVITVFCVLTVA).

The protein localises to the secreted. The polypeptide is Kidney androgen-regulated protein (Kap) (Rattus norvegicus (Rat)).